Reading from the N-terminus, the 290-residue chain is Nucleotide-binding protein FN1089 (290 aa).

Residue 11–18 (GLSGAGKT) participates in ATP binding. 56–59 (DIRT) contacts GTP.

This sequence belongs to the RapZ-like family.

Displays ATPase and GTPase activities. In Fusobacterium nucleatum subsp. nucleatum (strain ATCC 25586 / DSM 15643 / BCRC 10681 / CIP 101130 / JCM 8532 / KCTC 2640 / LMG 13131 / VPI 4355), this protein is Nucleotide-binding protein FN1089.